We begin with the raw amino-acid sequence, 340 residues long: Glyceraldehyde-3-phosphate dehydrogenase (340 aa).

Residues 11-12 (TI) and Gly-109 each bind NAD(+). D-glyceraldehyde 3-phosphate is bound at residue 138–140 (SCN). The active-site Nucleophile is Cys-139. Arg-167 is a binding site for NAD(+). Residue 193 to 194 (HA) participates in D-glyceraldehyde 3-phosphate binding. Residue Gln-300 coordinates NAD(+).

Belongs to the glyceraldehyde-3-phosphate dehydrogenase family. In terms of assembly, homotetramer.

It is found in the cytoplasm. The catalysed reaction is D-glyceraldehyde 3-phosphate + phosphate + NADP(+) = (2R)-3-phospho-glyceroyl phosphate + NADPH + H(+). It catalyses the reaction D-glyceraldehyde 3-phosphate + phosphate + NAD(+) = (2R)-3-phospho-glyceroyl phosphate + NADH + H(+). It participates in carbohydrate degradation; glycolysis; pyruvate from D-glyceraldehyde 3-phosphate: step 1/5. In Saccharolobus islandicus (strain M.14.25 / Kamchatka #1) (Sulfolobus islandicus), this protein is Glyceraldehyde-3-phosphate dehydrogenase.